A 333-amino-acid chain; its full sequence is Biotin synthase (333 aa).

One can recognise a Radical SAM core domain in the interval 46 to 275; that stretch reads YYGKKVKLNM…TKEIRISGGR (230 aa). [4Fe-4S] cluster contacts are provided by Cys-64, Cys-68, and Cys-71. [2Fe-2S] cluster-binding residues include Cys-108, Cys-140, Cys-200, and Arg-270.

It belongs to the radical SAM superfamily. Biotin synthase family. As to quaternary structure, homodimer. [4Fe-4S] cluster is required as a cofactor. The cofactor is [2Fe-2S] cluster.

It carries out the reaction (4R,5S)-dethiobiotin + (sulfur carrier)-SH + 2 reduced [2Fe-2S]-[ferredoxin] + 2 S-adenosyl-L-methionine = (sulfur carrier)-H + biotin + 2 5'-deoxyadenosine + 2 L-methionine + 2 oxidized [2Fe-2S]-[ferredoxin]. The protein operates within cofactor biosynthesis; biotin biosynthesis; biotin from 7,8-diaminononanoate: step 2/2. Functionally, catalyzes the conversion of dethiobiotin (DTB) to biotin by the insertion of a sulfur atom into dethiobiotin via a radical-based mechanism. The chain is Biotin synthase from Halalkalibacterium halodurans (strain ATCC BAA-125 / DSM 18197 / FERM 7344 / JCM 9153 / C-125) (Bacillus halodurans).